A 104-amino-acid polypeptide reads, in one-letter code: Nucleoid-associated protein OB0030 (104 aa).

Residues 1-23 (MKGNMNNMMKQMQKMQKKMMQAQ) are disordered.

This sequence belongs to the YbaB/EbfC family. Homodimer.

The protein localises to the cytoplasm. It localises to the nucleoid. Its function is as follows. Binds to DNA and alters its conformation. May be involved in regulation of gene expression, nucleoid organization and DNA protection. This chain is Nucleoid-associated protein OB0030, found in Oceanobacillus iheyensis (strain DSM 14371 / CIP 107618 / JCM 11309 / KCTC 3954 / HTE831).